The following is a 576-amino-acid chain: Lysine--tRNA ligase, mitochondrial (576 aa).

A mitochondrion-targeting transit peptide spans 1–30 (MNVLLKRRSLTFAPRWLWCKCRSSRSRPYS).

It belongs to the class-II aminoacyl-tRNA synthetase family.

It is found in the mitochondrion matrix. It carries out the reaction tRNA(Lys) + L-lysine + ATP = L-lysyl-tRNA(Lys) + AMP + diphosphate. Its function is as follows. Catalyzes the attachment of lysine to tRNA(Lys) in the mitochondrion. This is Lysine--tRNA ligase, mitochondrial (MSK1) from Saccharomyces cerevisiae (strain ATCC 204508 / S288c) (Baker's yeast).